We begin with the raw amino-acid sequence, 93 residues long: Large ribosomal subunit protein uL23cz/uL23cy (93 aa).

This sequence belongs to the universal ribosomal protein uL23 family. Part of the 50S ribosomal subunit.

The protein localises to the plastid. It is found in the chloroplast. In terms of biological role, binds to 23S rRNA. This Glycine max (Soybean) protein is Large ribosomal subunit protein uL23cz/uL23cy (rpl23-A).